A 483-amino-acid polypeptide reads, in one-letter code: CdaA regulatory protein CdaR (483 aa).

Residues 9–26 (WAVKIIALLFALLLYVAV) form a helical membrane-spanning segment. YbbR-like domains are found at residues 55 to 135 (IPVK…TVTI), 143 to 228 (FPVE…KITV), 237 to 316 (VPFK…TLHI), and 329 to 394 (VPIK…VNGP). Positions 410–483 (LTSKKSNTST…STANSQSSSE (74 aa)) are disordered. Residues 413 to 430 (KKSNTSTNDNSSNTSGNQ) are compositionally biased toward low complexity. Over residues 431–454 (DTDKQTNDQKNNQQEDTKNTDKNN) the composition is skewed to basic and acidic residues.

As to quaternary structure, interacts with CdaA.

It localises to the cell membrane. Its function is as follows. Upon coexpression in E.coli stimulates the diadenylate cyclase activity of CdaA about 20-fold. In B.subtilis c-di-AMP is a second messenger that mediates growth, DNA repair and cell wall homeostasis; it is toxic when present in excess. The chain is CdaA regulatory protein CdaR from Bacillus subtilis (strain 168).